A 503-amino-acid polypeptide reads, in one-letter code: ATP synthase subunit alpha (503 aa).

169-176 (GDRGTGKT) lines the ATP pocket.

Belongs to the ATPase alpha/beta chains family. F-type ATPases have 2 components, CF(1) - the catalytic core - and CF(0) - the membrane proton channel. CF(1) has five subunits: alpha(3), beta(3), gamma(1), delta(1), epsilon(1). CF(0) has three main subunits: a(1), b(2) and c(9-12). The alpha and beta chains form an alternating ring which encloses part of the gamma chain. CF(1) is attached to CF(0) by a central stalk formed by the gamma and epsilon chains, while a peripheral stalk is formed by the delta and b chains.

It localises to the cell inner membrane. It catalyses the reaction ATP + H2O + 4 H(+)(in) = ADP + phosphate + 5 H(+)(out). Produces ATP from ADP in the presence of a proton gradient across the membrane. The alpha chain is a regulatory subunit. The sequence is that of ATP synthase subunit alpha from Leptospira interrogans serogroup Icterohaemorrhagiae serovar copenhageni (strain Fiocruz L1-130).